The chain runs to 78 residues: Large ribosomal subunit protein bL28 (78 aa).

Belongs to the bacterial ribosomal protein bL28 family.

The protein is Large ribosomal subunit protein bL28 of Trichodesmium erythraeum (strain IMS101).